Here is a 235-residue protein sequence, read N- to C-terminus: Phosphoribosylaminoimidazole-succinocarboxamide synthase (235 aa).

This sequence belongs to the SAICAR synthetase family.

The enzyme catalyses 5-amino-1-(5-phospho-D-ribosyl)imidazole-4-carboxylate + L-aspartate + ATP = (2S)-2-[5-amino-1-(5-phospho-beta-D-ribosyl)imidazole-4-carboxamido]succinate + ADP + phosphate + 2 H(+). It participates in purine metabolism; IMP biosynthesis via de novo pathway; 5-amino-1-(5-phospho-D-ribosyl)imidazole-4-carboxamide from 5-amino-1-(5-phospho-D-ribosyl)imidazole-4-carboxylate: step 1/2. The polypeptide is Phosphoribosylaminoimidazole-succinocarboxamide synthase (Clostridium acetobutylicum (strain ATCC 824 / DSM 792 / JCM 1419 / IAM 19013 / LMG 5710 / NBRC 13948 / NRRL B-527 / VKM B-1787 / 2291 / W)).